The sequence spans 134 residues: Fluoride-specific ion channel FluC 2 (134 aa).

4 consecutive transmembrane segments (helical) span residues 1–21 (MNYF…EITG), 28–48 (IFPV…LFFM), 68–88 (GFLG…LLLF), and 92–112 (LLIG…SGIL). Na(+) contacts are provided by glycine 71 and threonine 74.

It belongs to the fluoride channel Fluc/FEX (TC 1.A.43) family.

The protein localises to the cell membrane. The catalysed reaction is fluoride(in) = fluoride(out). Na(+) is not transported, but it plays an essential structural role and its presence is essential for fluoride channel function. In terms of biological role, fluoride-specific ion channel. Important for reducing fluoride concentration in the cell, thus reducing its toxicity. The protein is Fluoride-specific ion channel FluC 2 of Carboxydothermus hydrogenoformans (strain ATCC BAA-161 / DSM 6008 / Z-2901).